A 259-amino-acid chain; its full sequence is Cytochrome c oxidase subunit 3 (259 aa).

Transmembrane regions (helical) follow at residues 13–33, 36–56, 80–100, 125–145, 154–174, 195–215, and 237–257; these read PWPLTGSLGAMFLTVGLTSWF, HGFITMLLGLFLVLMTMFQWW, GMVLFITSEICFFFAFFWAYF, FQIPLLNTAILLASGVTVTWA, HAEATQSMVLTVILGGYFTLL, FFVATGFHGLHVIIGSVFLLI, and AWYWHFVDVVWLILYTCIYWW.

Belongs to the cytochrome c oxidase subunit 3 family. Component of the cytochrome c oxidase (complex IV, CIV), a multisubunit enzyme composed of a catalytic core of 3 subunits and several supernumerary subunits. The complex exists as a monomer or a dimer and forms supercomplexes (SCs) in the inner mitochondrial membrane with ubiquinol-cytochrome c oxidoreductase (cytochrome b-c1 complex, complex III, CIII).

The protein localises to the mitochondrion inner membrane. It catalyses the reaction 4 Fe(II)-[cytochrome c] + O2 + 8 H(+)(in) = 4 Fe(III)-[cytochrome c] + 2 H2O + 4 H(+)(out). Component of the cytochrome c oxidase, the last enzyme in the mitochondrial electron transport chain which drives oxidative phosphorylation. The respiratory chain contains 3 multisubunit complexes succinate dehydrogenase (complex II, CII), ubiquinol-cytochrome c oxidoreductase (cytochrome b-c1 complex, complex III, CIII) and cytochrome c oxidase (complex IV, CIV), that cooperate to transfer electrons derived from NADH and succinate to molecular oxygen, creating an electrochemical gradient over the inner membrane that drives transmembrane transport and the ATP synthase. Cytochrome c oxidase is the component of the respiratory chain that catalyzes the reduction of oxygen to water. Electrons originating from reduced cytochrome c in the intermembrane space (IMS) are transferred via the dinuclear copper A center (CU(A)) of subunit 2 and heme A of subunit 1 to the active site in subunit 1, a binuclear center (BNC) formed by heme A3 and copper B (CU(B)). The BNC reduces molecular oxygen to 2 water molecules using 4 electrons from cytochrome c in the IMS and 4 protons from the mitochondrial matrix. In Heterololigo bleekeri (Spear squid), this protein is Cytochrome c oxidase subunit 3 (COIII).